A 308-amino-acid chain; its full sequence is Aliphatic nitrilase (308 aa).

The CN hydrolase domain occupies 4-270; it reads FRAAVVQAAP…ETILTADLDT (267 aa). E44 functions as the Proton acceptor in the catalytic mechanism. The active site involves K130. C164 acts as the Nucleophile in catalysis.

Belongs to the carbon-nitrogen hydrolase superfamily. Nitrilase family.

It catalyses the reaction a nitrile + 2 H2O = a carboxylate + NH4(+). Nitrilase that hydrolyzes preferentially phenylacetonitrile, but not (R,S)-mandelonitrile. Also acts on dinitriles like phenylenediacetonitriles (PDAs) 1,2-PDA, 1,3-PDA, and 1,4-PDA, and cyanophenyl acetonitriles (CPAs) 2-CPA and 4-CPA, but with lower activities. This Sinorhizobium fredii (strain HH103) protein is Aliphatic nitrilase (nit).